A 187-amino-acid chain; its full sequence is ATP synthase subunit b 2 (187 aa).

Residues 39-61 (SQLVWLVLSFAALYLLMSRVALP) form a helical membrane-spanning segment.

This sequence belongs to the ATPase B chain family. As to quaternary structure, F-type ATPases have 2 components, F(1) - the catalytic core - and F(0) - the membrane proton channel. F(1) has five subunits: alpha(3), beta(3), gamma(1), delta(1), epsilon(1). F(0) has three main subunits: a(1), b(2) and c(10-14). The alpha and beta chains form an alternating ring which encloses part of the gamma chain. F(1) is attached to F(0) by a central stalk formed by the gamma and epsilon chains, while a peripheral stalk is formed by the delta and b chains.

It is found in the cell inner membrane. Its function is as follows. F(1)F(0) ATP synthase produces ATP from ADP in the presence of a proton or sodium gradient. F-type ATPases consist of two structural domains, F(1) containing the extramembraneous catalytic core and F(0) containing the membrane proton channel, linked together by a central stalk and a peripheral stalk. During catalysis, ATP synthesis in the catalytic domain of F(1) is coupled via a rotary mechanism of the central stalk subunits to proton translocation. Functionally, component of the F(0) channel, it forms part of the peripheral stalk, linking F(1) to F(0). This Parvibaculum lavamentivorans (strain DS-1 / DSM 13023 / NCIMB 13966) protein is ATP synthase subunit b 2.